The following is a 119-amino-acid chain: RIIa domain-containing protein 1 (119 aa).

The RIIa domain occupies 70 to 104; that stretch reads KEVSLLISGFFREMFLKRPDNILEFAAHYFTDPRL.

As to expression, abundant in tissues rich in highly ciliated cells, such as testis, trachea and olfactory epithelium.

The sequence is that of RIIa domain-containing protein 1 (Riiad1) from Mus musculus (Mouse).